Consider the following 154-residue polypeptide: Thioredoxin-like protein CXXS2 (154 aa).

The region spanning 23-148 is the Thioredoxin domain; sequence RRNKTQARSQ…LQKKTAAAAN (126 aa). The residue at position 31 (Ser31) is a Phosphoserine.

This sequence belongs to the thioredoxin family. Ubiquitous.

It localises to the cytoplasm. Functionally, possesses low disulfide reductase activity, but efficient protein disulfide isomerase activity. Does not possess deglutathionylation activity. This Arabidopsis thaliana (Mouse-ear cress) protein is Thioredoxin-like protein CXXS2 (CXXS2).